A 387-amino-acid chain; its full sequence is Putative 8-amino-7-oxononanoate synthase (387 aa).

Position 19 (Arg19) interacts with substrate. Pyridoxal 5'-phosphate is bound at residue 107–108; that stretch reads GY. Position 132 (His132) interacts with substrate. Residues Ser180, 206-209, and 237-240 each bind pyridoxal 5'-phosphate; these read DEAH and TFGK. N6-(pyridoxal phosphate)lysine is present on Lys240. Thr354 is a substrate binding site.

The protein belongs to the class-II pyridoxal-phosphate-dependent aminotransferase family. BioF subfamily. Homodimer. Requires pyridoxal 5'-phosphate as cofactor.

It carries out the reaction 6-carboxyhexanoyl-[ACP] + L-alanine + H(+) = (8S)-8-amino-7-oxononanoate + holo-[ACP] + CO2. The protein operates within cofactor biosynthesis; biotin biosynthesis. In terms of biological role, catalyzes the decarboxylative condensation of pimeloyl-[acyl-carrier protein] and L-alanine to produce 8-amino-7-oxononanoate (AON), [acyl-carrier protein], and carbon dioxide. This is Putative 8-amino-7-oxononanoate synthase (bioF) from Pasteurella multocida (strain Pm70).